Here is a 369-residue protein sequence, read N- to C-terminus: Glycolate oxidase 1 (369 aa).

The region spanning 1 to 360 (MGEITNVMEY…TRKHIITESD (360 aa)) is the FMN hydroxy acid dehydrogenase domain. Tyr25 contributes to the glyoxylate binding site. FMN contacts are provided by residues 78 to 80 (PTA), Ser107, 128 to 130 (QLY), and Thr156. Tyr130 lines the glyoxylate pocket. Glyoxylate is bound at residue Arg165. FMN contacts are provided by Lys231 and Ser253. Positions 255 and 258 each coordinate glyoxylate. His255 functions as the Proton acceptor in the catalytic mechanism. FMN is bound by residues 286 to 290 (DGGVR) and 309 to 310 (GR).

It belongs to the FMN-dependent alpha-hydroxy acid dehydrogenase family. As to quaternary structure, homotetramer. It depends on FMN as a cofactor.

It is found in the peroxisome. It catalyses the reaction glycolate + O2 = glyoxylate + H2O2. It participates in photosynthesis; photorespiration; glycine from 2-phosphoglycolate: step 2/3. Catalyzes the oxidation of glycolate to glyoxylate, with a reduction of O2 to H2O2. Is an essential enzyme in photorespiration in plants. Photorespiration plays a vital role in C4 photosynthesis in Z.mays and is essential for maize seedling development and maintaining low (non-toxic) levels of glycolate. The protein is Glycolate oxidase 1 of Zea mays (Maize).